A 694-amino-acid polypeptide reads, in one-letter code: DNA polymerase eta (694 aa).

The region spanning 9–258 (VALVDMDCFF…MPIRKIRSLG (250 aa)) is the UmuC domain. Mg(2+) is bound by residues Asp13 and Met14. The Mn(2+) site is built by Asp13 and Met14. Residue Arg61 participates in a 2'-deoxyribonucleoside 5'-triphosphate binding. Residues Asp115 and Glu116 each coordinate Mg(2+). Mn(2+) is bound by residues Asp115 and Glu116. Residue Glu116 is part of the active site. The tract at residues 565 to 598 (DSGPDDGAVKPVSSKAVSTEMNVAGDSPNVLDSP) is disordered. Residues 609–643 (ATEDQVLCEKCDSLVPVWDMPEHTDYHFALELQKS) form a UBZ3-type zinc finger. Residues Cys616, Cys619, His631, and His635 each coordinate Zn(2+). Residues 651–694 (KPQAIPAVSPQGKRNPKSPSASSSKRLRPHGMQTLESFFKPLTH) form a disordered region. Residues Lys663, Lys667, and Lys675 each participate in a glycyl lysine isopeptide (Lys-Gly) (interchain with G-Cter in ubiquitin) cross-link. The PIP-box motif lies at 682-689 (MQTLESFF). Lys690 participates in a covalent cross-link: Glycyl lysine isopeptide (Lys-Gly) (interchain with G-Cter in ubiquitin).

It belongs to the DNA polymerase type-Y family. In terms of assembly, interacts with REV1. Interacts with monoubiquitinated PCNA, but not unmodified PCNA. Interacts with POLI; this interaction targets POLI to the replication machinery. Interacts with PALB2 and BRCA2; the interactions are direct and are required to sustain the recruitment of POLH at blocked replication forks and to stimulate POLH-dependent DNA synthesis on D loop substrates. Interacts (via C-terminus) with TRAIP. Interacts with ubiquitin. Interacts with POLDIP2. The cofactor is Mg(2+). Mn(2+) is required as a cofactor. Monoubiquitinated by RCHY1/PIRH2. Ubiquitination depends on integrity of the UBZ3-type zinc finger domain and is enhanced by TRAIP. Ubiquitination inhibits the ability of PolH to interact with PCNA and to bypass UV-induced lesions. Ubiquitous.

The protein resides in the nucleus. The enzyme catalyses DNA(n) + a 2'-deoxyribonucleoside 5'-triphosphate = DNA(n+1) + diphosphate. Its activity is regulated as follows. The enzyme in complex with the DNA substrate binds a third divalent metal cation. The binding of this third divalent cation, which is coordinated by water molecules and two oxygen atoms from DNA and dNTP, is essential for catalyzing the DNA synthesis. DNA polymerase specifically involved in the DNA repair by translesion synthesis (TLS). Due to low processivity on both damaged and normal DNA, cooperates with the heterotetrameric (REV3L, REV7, POLD2 and POLD3) POLZ complex for complete bypass of DNA lesions. Inserts one or 2 nucleotide(s) opposite the lesion, the primer is further extended by the tetrameric POLZ complex. In the case of 1,2-intrastrand d(GpG)-cisplatin cross-link, inserts dCTP opposite the 3' guanine. Particularly important for the repair of UV-induced pyrimidine dimers. Although inserts the correct base, may cause base transitions and transversions depending upon the context. May play a role in hypermutation at immunoglobulin genes. Forms a Schiff base with 5'-deoxyribose phosphate at abasic sites, but does not have any lyase activity, preventing the release of the 5'-deoxyribose phosphate (5'-dRP) residue. This covalent trapping of the enzyme by the 5'-dRP residue inhibits its DNA synthetic activity during base excision repair, thereby avoiding high incidence of mutagenesis. Targets POLI to replication foci. This is DNA polymerase eta (Polh) from Mus musculus (Mouse).